Consider the following 307-residue polypeptide: UDP-3-O-acyl-N-acetylglucosamine deacetylase (307 aa).

Zn(2+)-binding residues include histidine 80, histidine 239, and aspartate 243. Histidine 266 functions as the Proton donor in the catalytic mechanism.

The protein belongs to the LpxC family. Zn(2+) serves as cofactor.

It catalyses the reaction a UDP-3-O-[(3R)-3-hydroxyacyl]-N-acetyl-alpha-D-glucosamine + H2O = a UDP-3-O-[(3R)-3-hydroxyacyl]-alpha-D-glucosamine + acetate. Its pathway is glycolipid biosynthesis; lipid IV(A) biosynthesis; lipid IV(A) from (3R)-3-hydroxytetradecanoyl-[acyl-carrier-protein] and UDP-N-acetyl-alpha-D-glucosamine: step 2/6. Catalyzes the hydrolysis of UDP-3-O-myristoyl-N-acetylglucosamine to form UDP-3-O-myristoylglucosamine and acetate, the committed step in lipid A biosynthesis. This chain is UDP-3-O-acyl-N-acetylglucosamine deacetylase, found in Neisseria meningitidis serogroup A / serotype 4A (strain DSM 15465 / Z2491).